Reading from the N-terminus, the 421-residue chain is Gamma-glutamyl phosphate reductase (421 aa).

It belongs to the gamma-glutamyl phosphate reductase family.

Its subcellular location is the cytoplasm. It carries out the reaction L-glutamate 5-semialdehyde + phosphate + NADP(+) = L-glutamyl 5-phosphate + NADPH + H(+). Its pathway is amino-acid biosynthesis; L-proline biosynthesis; L-glutamate 5-semialdehyde from L-glutamate: step 2/2. Catalyzes the NADPH-dependent reduction of L-glutamate 5-phosphate into L-glutamate 5-semialdehyde and phosphate. The product spontaneously undergoes cyclization to form 1-pyrroline-5-carboxylate. The protein is Gamma-glutamyl phosphate reductase of Acinetobacter baumannii (strain AYE).